The primary structure comprises 124 residues: Small ribosomal subunit protein bS6 (124 aa).

Residues 96 to 124 (ETAPSPMMKEVQREEARKAAQTTTEGQAA) form a disordered region. Positions 115–124 (AQTTTEGQAA) are enriched in polar residues.

This sequence belongs to the bacterial ribosomal protein bS6 family.

Its function is as follows. Binds together with bS18 to 16S ribosomal RNA. This Cupriavidus pinatubonensis (strain JMP 134 / LMG 1197) (Cupriavidus necator (strain JMP 134)) protein is Small ribosomal subunit protein bS6.